Here is a 431-residue protein sequence, read N- to C-terminus: Serine--tRNA ligase (431 aa).

The interval 41–66 (QSRTQELQAERNARSKSIGEAARRGE) is disordered. Position 240–242 (240–242 (TSE)) interacts with L-serine. 271-273 (RSE) contacts ATP. Glutamate 294 provides a ligand contact to L-serine. 358 to 361 (EISS) is an ATP binding site. Residue serine 392 coordinates L-serine.

This sequence belongs to the class-II aminoacyl-tRNA synthetase family. Type-1 seryl-tRNA synthetase subfamily. Homodimer. The tRNA molecule binds across the dimer.

It is found in the cytoplasm. The catalysed reaction is tRNA(Ser) + L-serine + ATP = L-seryl-tRNA(Ser) + AMP + diphosphate + H(+). It carries out the reaction tRNA(Sec) + L-serine + ATP = L-seryl-tRNA(Sec) + AMP + diphosphate + H(+). It participates in aminoacyl-tRNA biosynthesis; selenocysteinyl-tRNA(Sec) biosynthesis; L-seryl-tRNA(Sec) from L-serine and tRNA(Sec): step 1/1. Catalyzes the attachment of serine to tRNA(Ser). Is also able to aminoacylate tRNA(Sec) with serine, to form the misacylated tRNA L-seryl-tRNA(Sec), which will be further converted into selenocysteinyl-tRNA(Sec). This Aeromonas hydrophila subsp. hydrophila (strain ATCC 7966 / DSM 30187 / BCRC 13018 / CCUG 14551 / JCM 1027 / KCTC 2358 / NCIMB 9240 / NCTC 8049) protein is Serine--tRNA ligase.